Reading from the N-terminus, the 213-residue chain is NADH-quinone oxidoreductase subunit C (213 aa).

This sequence belongs to the complex I 30 kDa subunit family. As to quaternary structure, NDH-1 is composed of 15 different subunits. Subunits NuoB, C, D, E, F, and G constitute the peripheral sector of the complex.

It is found in the cell membrane. It catalyses the reaction a quinone + NADH + 5 H(+)(in) = a quinol + NAD(+) + 4 H(+)(out). Functionally, NDH-1 shuttles electrons from NADH, via FMN and iron-sulfur (Fe-S) centers, to quinones in the respiratory chain. The immediate electron acceptor for the enzyme in this species is believed to be a menaquinone. Couples the redox reaction to proton translocation (for every two electrons transferred, four hydrogen ions are translocated across the cytoplasmic membrane), and thus conserves the redox energy in a proton gradient. This chain is NADH-quinone oxidoreductase subunit C, found in Deinococcus geothermalis (strain DSM 11300 / CIP 105573 / AG-3a).